The chain runs to 636 residues: DNA-directed RNA polymerase subunit beta' (636 aa).

Residues Cys70, Cys72, Cys85, and Cys88 each coordinate Zn(2+). Mg(2+) contacts are provided by Asp471, Asp473, and Asp475.

It belongs to the RNA polymerase beta' chain family. RpoC1 subfamily. It depends on Mg(2+) as a cofactor. Zn(2+) serves as cofactor.

It is found in the plastid. Its subcellular location is the cyanelle. The catalysed reaction is RNA(n) + a ribonucleoside 5'-triphosphate = RNA(n+1) + diphosphate. Functionally, DNA-dependent RNA polymerase catalyzes the transcription of DNA into RNA using the four ribonucleoside triphosphates as substrates. The polypeptide is DNA-directed RNA polymerase subunit beta' (Cyanophora paradoxa).